The primary structure comprises 186 residues: Ribosome-recycling factor (186 aa).

It belongs to the RRF family.

The protein resides in the cytoplasm. Its function is as follows. Responsible for the release of ribosomes from messenger RNA at the termination of protein biosynthesis. May increase the efficiency of translation by recycling ribosomes from one round of translation to another. This chain is Ribosome-recycling factor, found in Bordetella parapertussis (strain 12822 / ATCC BAA-587 / NCTC 13253).